The sequence spans 130 residues: Small ribosomal subunit protein uS9 (130 aa).

The interval 98–130 (LKRAGLLTRDPRMKERKKPGLKKARRSPQFSKR) is disordered. Residues 111 to 130 (KERKKPGLKKARRSPQFSKR) are compositionally biased toward basic residues.

The protein belongs to the universal ribosomal protein uS9 family.

In Staphylococcus haemolyticus (strain JCSC1435), this protein is Small ribosomal subunit protein uS9.